A 407-amino-acid chain; its full sequence is Argininosuccinate synthase (407 aa).

ATP contacts are provided by residues 16 to 24 and Ala44; that span reads AYSGGLDTS. L-citrulline-binding residues include Tyr96 and Ser101. Gly126 contributes to the ATP binding site. The L-aspartate site is built by Thr128, Asn132, and Asp133. Asn132 contacts L-citrulline. L-citrulline is bound by residues Arg136, Ser185, Ser194, Glu270, and Tyr282.

It belongs to the argininosuccinate synthase family. Type 1 subfamily. In terms of assembly, homotetramer.

The protein localises to the cytoplasm. The catalysed reaction is L-citrulline + L-aspartate + ATP = 2-(N(omega)-L-arginino)succinate + AMP + diphosphate + H(+). The protein operates within amino-acid biosynthesis; L-arginine biosynthesis; L-arginine from L-ornithine and carbamoyl phosphate: step 2/3. This Shewanella loihica (strain ATCC BAA-1088 / PV-4) protein is Argininosuccinate synthase.